A 486-amino-acid chain; its full sequence is Vanillin dehydrogenase (486 aa).

Residues 210 to 211 (GP), 230 to 231 (GS), and 252 to 254 (ELG) contribute to the NAD(+) site. Glu252 serves as the catalytic Proton acceptor. Cys286 (nucleophile) is an active-site residue. 380–382 (EVF) is an NAD(+) binding site.

This sequence belongs to the aldehyde dehydrogenase family.

The enzyme catalyses vanillin + NAD(+) + H2O = vanillate + NADH + 2 H(+). Functionally, catalyzes NAD(+)-dependent oxidation of vanillin to vanillate. Also oxidizes other aromatic aldehydes including benzaldehyde, coniferyl aldehyde and cinnamaldehyde, but has a preference for vanillin. Not active with NADP(+). Involved in the degradation pathway of lignin-derived aromatic compounds of plant cell walls. Catalyzes the conversion of vanillin to vanillate due to toxicity of vanillin to the cells. The chain is Vanillin dehydrogenase from Amycolatopsis sp. (strain ATCC 39116 / 75iv2).